Here is a 1123-residue protein sequence, read N- to C-terminus: Polyprotein of EF-Ts, chloroplastic (1123 aa).

Residues 1–73 (MTPVVHCSVG…SSARRPRTLS (73 aa)) constitute a chloroplast transit peptide. The disordered stretch occupies residues 68–141 (RPRTLSAATV…MPPLNDEDLV (74 aa)). Over residues 94-103 (TSEESSEDTA) the composition is skewed to acidic residues. The span at 106–119 (TAEASEQAEASTSS) shows a compositional bias: low complexity. An S1 motif 1 domain is found at 143–212 (GASFTGKVRS…ETGRISLTMR (70 aa)). Residues 213 to 258 (TGGDYVKPKTETPKAASGGRNTTATTSRGSPRQTRERDEAKSMGET) form a disordered region. A compositionally biased stretch (polar residues) spans 231–244 (GRNTTATTSRGSPR). The segment covering 245–254 (QTRERDEAKS) has biased composition (basic and acidic residues). One can recognise an S1 motif 2 domain in the interval 263-331 (GQFLDGVVKN…VRGQVTLTMK (69 aa)). 2 disordered regions span residues 443–670 (KTES…SEKT) and 894–923 (VAAQTAAKAPPAAPPKDDKPEETAETEEKK). Positions 486 to 501 (EGSVTTEPTEAASTEF) are enriched in polar residues. A compositionally biased stretch (low complexity) spans 551-587 (SVASTESVTAVVEESAPVSSVAIEVPAPEASEASAQE). A compositionally biased stretch (acidic residues) spans 630 to 639 (KPDEPEESLI). Composition is skewed to low complexity over residues 657-670 (AAVPEEVAASSEKT) and 894-903 (VAAQTAAKAP). Over residues 908 to 923 (PKDDKPEETAETEEKK) the composition is skewed to basic and acidic residues.

It belongs to the EF-Ts family. Component of the chloroplast ribosome 30S and 70S subunits, as well as polysomes. As to quaternary structure, component of the chloroplast ribosome 70S subunit, and at low levels, present in polysomes. In terms of assembly, associates transiently with chloroplast polysomes.

The protein resides in the plastid. It localises to the chloroplast. Functionally, associates with the EF-Tu.GDP complex and induces the exchange of GDP to GTP. It remains bound to the aminoacyl-tRNA.EF-Tu.GTP complex up to the GTP hydrolysis stage on the ribosome. Its function is as follows. Binds to psbD and psbA 5'-untranslated regions (UTRs) in vitro. The chain is Polyprotein of EF-Ts, chloroplastic from Oryza sativa subsp. indica (Rice).